The sequence spans 407 residues: Large ribosomal subunit protein uL4y (407 aa).

The segment at 57-96 is disordered; it reads PYAVSKKAGHQTSAESWGTGRAVSRIPRVPGGGTHRAGQA.

This sequence belongs to the universal ribosomal protein uL4 family.

In Arabidopsis thaliana (Mouse-ear cress), this protein is Large ribosomal subunit protein uL4y (RPL4D).